A 663-amino-acid chain; its full sequence is UvrABC system protein B (663 aa).

One can recognise a Helicase ATP-binding domain in the interval 31 to 188; that stretch reads DNIEGGEKAQ…NDLVDIQFER (158 aa). 44–51 serves as a coordination point for ATP; it reads GATGTGKT. The Beta-hairpin motif lies at 97 to 120; that stretch reads YYDYYQPEAYVPSSDTYIEKDSSV. Positions 435–601 constitute a Helicase C-terminal domain; the sequence is QMDDLLGEIN…TIKKDIRDLI (167 aa). The UVR domain occupies 627 to 662; the sequence is QEAIKKLQKQMQEAAELLDFELAAQIRDMVLELKAM.

Belongs to the UvrB family. As to quaternary structure, forms a heterotetramer with UvrA during the search for lesions. Interacts with UvrC in an incision complex.

The protein localises to the cytoplasm. The UvrABC repair system catalyzes the recognition and processing of DNA lesions. A damage recognition complex composed of 2 UvrA and 2 UvrB subunits scans DNA for abnormalities. Upon binding of the UvrA(2)B(2) complex to a putative damaged site, the DNA wraps around one UvrB monomer. DNA wrap is dependent on ATP binding by UvrB and probably causes local melting of the DNA helix, facilitating insertion of UvrB beta-hairpin between the DNA strands. Then UvrB probes one DNA strand for the presence of a lesion. If a lesion is found the UvrA subunits dissociate and the UvrB-DNA preincision complex is formed. This complex is subsequently bound by UvrC and the second UvrB is released. If no lesion is found, the DNA wraps around the other UvrB subunit that will check the other stand for damage. This chain is UvrABC system protein B, found in Streptococcus mutans serotype c (strain ATCC 700610 / UA159).